We begin with the raw amino-acid sequence, 55 residues long: MKTLSVFLVLVCLLGLVQSWEWPWNRQPTRYPIPSPNPRDKWCRLNLGPAWGGRC.

Residues 1-19 (MKTLSVFLVLVCLLGLVQS) form the signal peptide. Pro28, Pro32, Pro34, and Pro38 each carry hydroxyproline. A disulfide bond links Cys43 and Cys55.

Main cells of the accessory glands of males (paragonial gland).

It is found in the secreted. Represses female sexual receptivity and stimulates oviposition. In Drosophila sechellia (Fruit fly), this protein is Accessory gland-specific peptide 70A (Acp70A).